Here is a 539-residue protein sequence, read N- to C-terminus: Sphingosine-1-phosphate lyase (539 aa).

Residues methionine 1–alanine 46 form the signal peptide. The Lumenal portion of the chain corresponds to alanine 47–arginine 54. Residues threonine 55–isoleucine 75 traverse the membrane as a helical segment. The Cytoplasmic portion of the chain corresponds to asparagine 76 to cysteine 539. Residue lysine 344 is modified to N6-(pyridoxal phosphate)lysine.

The protein belongs to the group II decarboxylase family. Sphingosine-1-phosphate lyase subfamily. The cofactor is pyridoxal 5'-phosphate.

The protein localises to the endoplasmic reticulum membrane. It catalyses the reaction sphinganine 1-phosphate = hexadecanal + phosphoethanolamine. It participates in lipid metabolism; sphingolipid metabolism. In terms of biological role, cleaves phosphorylated sphingoid bases (PSBs), such as sphingosine-1-phosphate, into fatty aldehydes and phosphoethanolamine. Elevates stress-induced ceramide production and apoptosis. The sequence is that of Sphingosine-1-phosphate lyase (SPL) from Oryza sativa subsp. japonica (Rice).